We begin with the raw amino-acid sequence, 503 residues long: Puromycin resistance protein pur8 (503 aa).

Topologically, residues 1-24 are cytoplasmic; it reads MARKPDISAVPVESAACQGPDPRR. Residues 25 to 45 form a helical membrane-spanning segment; sequence WWGLVVILAAQLLVVLDGTVV. Over 46-64 the chain is Extracellular; sequence NIALPSVQRDLGMSDTSRQ. A helical membrane pass occupies residues 65-85; it reads WVITAYTLAFGGLLLLGGRVA. Over 86–92 the chain is Cytoplasmic; sequence DAFGRRR. Residues 93 to 113 form a helical membrane-spanning segment; that stretch reads IFAVGILGFGLASLLGGAAPD. Over 114 to 122 the chain is Extracellular; it reads PGTLFLARA. Residues 123–143 form a helical membrane-spanning segment; that stretch reads LQGVFAAALAPAALALINTLF. Residues 144–152 are Cytoplasmic-facing; that stretch reads TEPGERGKA. A helical membrane pass occupies residues 153-173; the sequence is FGVYGAVSGGGAAVGLLAGGL. Residues 174–181 are Extracellular-facing; it reads LTEYLDWR. A helical transmembrane segment spans residues 182–202; sequence WCLYVNAPVALLALLGCRLLP. At 203-212 the chain is on the cytoplasmic side; the sequence is RDRRTGRAVR. Residues 213–233 traverse the membrane as a helical segment; the sequence is LDLPGTLLGCGGLVAIVYAFA. Topologically, residues 234–241 are extracellular; that stretch reads EAESGWGD. Residues 242-262 form a helical membrane-spanning segment; sequence PLVVRLLVLGVLMLVAFALVE. Residues 263–280 are Cytoplasmic-facing; sequence RRVQDPLLPPGVVAHRVR. The chain crosses the membrane as a helical span at residues 281-301; that stretch reads GGSFLVVGLPQIGLFGLFLFL. The Extracellular portion of the chain corresponds to 302–313; the sequence is TYYLQGILDYSP. Residues 314–334 form a helical membrane-spanning segment; it reads VLTGVAFLPLGLGIAVGSSLI. The Cytoplasmic portion of the chain corresponds to 335–346; it reads AARLLPRTRPRT. The chain crosses the membrane as a helical span at residues 347 to 367; sequence LIVGALLAAAAGMALLTRLEP. The Extracellular segment spans residues 368–371; sequence DTPQ. A helical transmembrane segment spans residues 372-392; the sequence is VYLTHLLPAQILIGLGIGCMM. Over 393-422 the chain is Cytoplasmic; sequence MPAMHTATARVAPHEAGAAAAVVNSAQQVG. The helical transmembrane segment at 423 to 443 threads the bilayer; the sequence is GALGVALLNTVSTGATAAYLA. Topologically, residues 444–461 are extracellular; the sequence is DHGTSPAATVDGTVHGYT. Residues 462–482 traverse the membrane as a helical segment; the sequence is VAIAFAVGVLLLTAVLAWVLI. The Cytoplasmic segment spans residues 483–503; sequence DSRTEAADETGSASVTPARPR.

It belongs to the major facilitator superfamily. EmrB family.

The protein localises to the cell membrane. Its function is as follows. May be involved in active puromycin efflux energized by a proton-dependent electrochemical gradient. In addition, it could be implicated in secreting N-acetylpuromycin, the last intermediate of the puromycin biosynthesis pathway, to the environment. In Streptomyces alboniger, this protein is Puromycin resistance protein pur8 (pur8).